Reading from the N-terminus, the 459-residue chain is Asparagine--tRNA ligase (459 aa).

This sequence belongs to the class-II aminoacyl-tRNA synthetase family. In terms of assembly, homodimer.

The protein resides in the cytoplasm. The catalysed reaction is tRNA(Asn) + L-asparagine + ATP = L-asparaginyl-tRNA(Asn) + AMP + diphosphate + H(+). The polypeptide is Asparagine--tRNA ligase (Pelobacter propionicus (strain DSM 2379 / NBRC 103807 / OttBd1)).